The sequence spans 365 residues: MSALKNYGLISIDSALHFPRSNQLQSYKRRNAKWVSPIAAVVPNFHLPMRSLEDKNRTNTDDIRSLRVITAIKTPYLPDGRFDLQAYDDLVNTQIENGAEGVIVGGTTGEGQLMSWDEHIMLIGHTVNCFGGRIKVIGNTGSNSTREAIHATEQGFAMGMHGALHINPYYGKTSIEGMNAHFQTVLHMGPTIIYNVPGRTCQDIPPQVIFKLSQNPNMAGVKECVGNNRVEEYTEKGIVVWSGNDDQCHDSRWDHGATGVISVTSNLVPGLMRKLMFEGRNSALNAKLLPLMDWLFQEPNPIGVNTALAQLGVARPVFRLPYVPLPLSKRIEFVKLVKEIGREHFVGDRDVQVLDDDDFILIGRY.

The transit peptide at 1–39 (MSALKNYGLISIDSALHFPRSNQLQSYKRRNAKWVSPIA) directs the protein to the chloroplast. Threonine 108 lines the pyruvate pocket. The active-site Proton donor/acceptor is the tyrosine 194. Catalysis depends on lysine 222, which acts as the Schiff-base intermediate with substrate. Isoleucine 261 provides a ligand contact to pyruvate.

The protein belongs to the DapA family.

It localises to the plastid. It is found in the chloroplast. It carries out the reaction L-aspartate 4-semialdehyde + pyruvate = (2S,4S)-4-hydroxy-2,3,4,5-tetrahydrodipicolinate + H2O + H(+). It functions in the pathway amino-acid biosynthesis; L-lysine biosynthesis via DAP pathway; (S)-tetrahydrodipicolinate from L-aspartate: step 3/4. Its function is as follows. Catalyzes the condensation of (S)-aspartate-beta-semialdehyde [(S)-ASA] and pyruvate to 4-hydroxy-tetrahydrodipicolinate (HTPA). The polypeptide is 4-hydroxy-tetrahydrodipicolinate synthase 1, chloroplastic (DHDPS1) (Arabidopsis thaliana (Mouse-ear cress)).